We begin with the raw amino-acid sequence, 459 residues long: Bifunctional protein GlmU (459 aa).

A pyrophosphorylase region spans residues methionine 1 to arginine 230. Residues leucine 9 to glycine 12, lysine 23, glutamine 73, and glycine 78 to threonine 79 contribute to the UDP-N-acetyl-alpha-D-glucosamine site. Aspartate 103 contributes to the Mg(2+) binding site. 4 residues coordinate UDP-N-acetyl-alpha-D-glucosamine: glycine 140, glutamate 155, asparagine 170, and asparagine 228. Asparagine 228 provides a ligand contact to Mg(2+). A linker region spans residues isoleucine 231–asparagine 251. Residues glycine 252–serine 459 are N-acetyltransferase. Residues arginine 333 and lysine 351 each contribute to the UDP-N-acetyl-alpha-D-glucosamine site. Histidine 363 (proton acceptor) is an active-site residue. UDP-N-acetyl-alpha-D-glucosamine-binding residues include tyrosine 366 and asparagine 377. Acetyl-CoA contacts are provided by residues asparagine 386–tyrosine 387, alanine 423, and arginine 440.

The protein in the N-terminal section; belongs to the N-acetylglucosamine-1-phosphate uridyltransferase family. In the C-terminal section; belongs to the transferase hexapeptide repeat family. As to quaternary structure, homotrimer. Mg(2+) is required as a cofactor.

The protein localises to the cytoplasm. It catalyses the reaction alpha-D-glucosamine 1-phosphate + acetyl-CoA = N-acetyl-alpha-D-glucosamine 1-phosphate + CoA + H(+). The catalysed reaction is N-acetyl-alpha-D-glucosamine 1-phosphate + UTP + H(+) = UDP-N-acetyl-alpha-D-glucosamine + diphosphate. It functions in the pathway nucleotide-sugar biosynthesis; UDP-N-acetyl-alpha-D-glucosamine biosynthesis; N-acetyl-alpha-D-glucosamine 1-phosphate from alpha-D-glucosamine 6-phosphate (route II): step 2/2. It participates in nucleotide-sugar biosynthesis; UDP-N-acetyl-alpha-D-glucosamine biosynthesis; UDP-N-acetyl-alpha-D-glucosamine from N-acetyl-alpha-D-glucosamine 1-phosphate: step 1/1. Its pathway is bacterial outer membrane biogenesis; LPS lipid A biosynthesis. In terms of biological role, catalyzes the last two sequential reactions in the de novo biosynthetic pathway for UDP-N-acetylglucosamine (UDP-GlcNAc). The C-terminal domain catalyzes the transfer of acetyl group from acetyl coenzyme A to glucosamine-1-phosphate (GlcN-1-P) to produce N-acetylglucosamine-1-phosphate (GlcNAc-1-P), which is converted into UDP-GlcNAc by the transfer of uridine 5-monophosphate (from uridine 5-triphosphate), a reaction catalyzed by the N-terminal domain. This Geobacillus thermodenitrificans (strain NG80-2) protein is Bifunctional protein GlmU.